Consider the following 146-residue polypeptide: Hemoglobin subunit beta (146 aa).

The Globin domain occupies 2–146 (QWAAEEKQLI…VAHALARKYH (145 aa)). Heme b is bound by residues His63 and His92.

Belongs to the globin family. As to quaternary structure, heterotetramer of two alpha chains and two beta chains. Red blood cells.

Involved in oxygen transport from the lung to the various peripheral tissues. The chain is Hemoglobin subunit beta (HBB) from Accipiter gentilis (Northern goshawk).